The chain runs to 291 residues: NAD kinase (291 aa).

The active-site Proton acceptor is Asp73. NAD(+) contacts are provided by residues 73-74 (DG), 147-148 (ND), Arg175, Asp177, 188-193 (TAYALS), Ala212, and Gln246.

The protein belongs to the NAD kinase family. A divalent metal cation is required as a cofactor.

Its subcellular location is the cytoplasm. It catalyses the reaction NAD(+) + ATP = ADP + NADP(+) + H(+). Its function is as follows. Involved in the regulation of the intracellular balance of NAD and NADP, and is a key enzyme in the biosynthesis of NADP. Catalyzes specifically the phosphorylation on 2'-hydroxyl of the adenosine moiety of NAD to yield NADP. The protein is NAD kinase of Polaromonas sp. (strain JS666 / ATCC BAA-500).